Reading from the N-terminus, the 72-residue chain is DNA-directed RNA polymerase subunit omega (72 aa).

It belongs to the RNA polymerase subunit omega family. The RNAP catalytic core consists of 2 alpha, 1 beta, 1 beta' and 1 omega subunit. When a sigma factor is associated with the core the holoenzyme is formed, which can initiate transcription.

The catalysed reaction is RNA(n) + a ribonucleoside 5'-triphosphate = RNA(n+1) + diphosphate. Functionally, promotes RNA polymerase assembly. Latches the N- and C-terminal regions of the beta' subunit thereby facilitating its interaction with the beta and alpha subunits. The polypeptide is DNA-directed RNA polymerase subunit omega (Clostridium kluyveri (strain NBRC 12016)).